The primary structure comprises 240 residues: uncharacterized protein (240 aa).

Polar residues predominate over residues 197-210 (PLKSHSASRLNHLT). The disordered stretch occupies residues 197–222 (PLKSHSASRLNHLTPSPRPGETPLEN).

This is an uncharacterized protein from Caenorhabditis elegans.